The chain runs to 158 residues: Lysozyme C (158 aa).

Positions methionine 1 to alanine 18 are cleaved as a signal peptide. A C-type lysozyme domain is found at lysine 19–arginine 150. 4 disulfide bridges follow: cysteine 24-cysteine 147, cysteine 46-cysteine 135, cysteine 80-cysteine 93, and cysteine 89-cysteine 107. Active-site residues include glutamate 51 and aspartate 68.

The protein belongs to the glycosyl hydrolase 22 family. In terms of assembly, monomer. In terms of tissue distribution, strongly expressed in gill and gonad, and marginally detectable in hemolymph and lymphoid organ. Not expressed in kidney, hepatopancreas or tail muscle.

Its subcellular location is the secreted. The enzyme catalyses Hydrolysis of (1-&gt;4)-beta-linkages between N-acetylmuramic acid and N-acetyl-D-glucosamine residues in a peptidoglycan and between N-acetyl-D-glucosamine residues in chitodextrins.. In terms of biological role, lysozymes have primarily a bacteriolytic function; those in tissues and body fluids are associated with the monocyte-macrophage system and enhance the activity of immunoagents. Has bacteriolytic activity against Gram-positive bacterium M.luteus, and Gram-negative shrimp pathogenic bacteria V.alginolyticus, V.parahaemolyticus and V.vulnificus. May play a role in host defense. The polypeptide is Lysozyme C (Penaeus merguiensis (Banana prawn)).